Here is a 584-residue protein sequence, read N- to C-terminus: Keratin, type I cytoskeletal 10 (584 aa).

The span at 1-15 (MSVRYSSSKHYSSSR) shows a compositional bias: low complexity. The interval 1-24 (MSVRYSSSKHYSSSRSGGGGGGGG) is disordered. A head region spans residues 1 to 145 (MSVRYSSSKH…GGDGGLLSGN (145 aa)). Phosphoserine occurs at positions 14, 16, 42, 53, 56, and 170. The segment at 146–181 (EKVTMQNLNDRLASYLDKVRALEESNYELEGKIKEW) is coil 1A. An IF rod domain is found at 146–460 (EKVTMQNLND…SLLEGEGSSG (315 aa)). The segment at 182-202 (YEKHGNSHQGEPRDYSKYYKT) is linker 1. Residues 203–294 (IDDLKNQILN…KNHEEEMKDL (92 aa)) are coil 1B. The segment at 295 to 317 (RNVSTGDVNVEMNAAPGVDLTQL) is linker 12. The tract at residues 318–456 (LNNMRSQYEQ…QTYRSLLEGE (139 aa)) is coil 2. The disordered stretch occupies residues 453 to 584 (LEGEGSSGGG…GESSSKGPRY (132 aa)). The span at 457–563 (GSSGGGGRGG…GGGYGGGSSS (107 aa)) shows a compositional bias: gly residues. The tract at residues 457-584 (GSSGGGGRGG…GESSSKGPRY (128 aa)) is tail. A compositionally biased stretch (low complexity) spans 564 to 584 (GGHKSSSSGSVGESSSKGPRY).

It belongs to the intermediate filament family. As to quaternary structure, heterotetramer of two type I and two type II keratins. Heterodimer with KRT1. Two heterodimers of KRT1 and KRT10 form a heterotetramer. The KRT10 subunit in the heterotetramer is probably disulfide-linked. Interacts with PLEC isoform 1C, when in a heterodimer with KRT1. In terms of assembly, (Microbial infection) Interacts (via C-terminal tail domain) with the S.aureus clumping factor, clfB; this interaction probably mediates S.aureus attachment to the keratinized squamous epithelial cells from the nasal cavity. (Microbial infection) Interacts (via the C-terminal tail domain) with S.pneumoniae serine-rich repeat protein PsrP; this interaction probably mediates S.pneumoniae adherence to lung tissue and subsequent pathogenesis. Neither protein has to be glycosylated for the interaction to occur. Seen in all suprabasal cell layers including stratum corneum. Expressed on the surface of lung cell lines. Localized on the surface of desquamated nasal epithelial cells (at protein level).

It localises to the secreted. The protein localises to the extracellular space. Its subcellular location is the cell surface. It is found in the cytoplasm. Plays a role in the establishment of the epidermal barrier on plantar skin. Involved in the maintenance of cell layer development and keratin filament bundles in suprabasal cells of the epithelium. Its function is as follows. (Microbial infection) Acts as a mediator of S.aureus adherence to desquamated nasal epithelial cells via clfB, and hence may play a role in nasal colonization. In terms of biological role, (Microbial infection) Binds S.pneumoniae PsrP, mediating adherence of the bacteria to lung cell lines. Reduction of levels of KRT10 keratin decrease adherence, overexpression increases adherence. Neither protein has to be glycosylated for the interaction to occur. The chain is Keratin, type I cytoskeletal 10 (KRT10) from Homo sapiens (Human).